A 102-amino-acid chain; its full sequence is Large ribosomal subunit protein bL21 (102 aa).

This sequence belongs to the bacterial ribosomal protein bL21 family. Part of the 50S ribosomal subunit. Contacts protein L20.

This protein binds to 23S rRNA in the presence of protein L20. The chain is Large ribosomal subunit protein bL21 from Bacillus cytotoxicus (strain DSM 22905 / CIP 110041 / 391-98 / NVH 391-98).